The following is a 141-amino-acid chain: Hemoglobin subunit alpha (141 aa).

One can recognise a Globin domain in the interval 1–141 (VLSPDDKKHV…VSTVLTSKYR (141 aa)). S3 carries the post-translational modification Phosphoserine. N6-succinyllysine is present on residues K7 and K11. Position 16 is an N6-acetyllysine; alternate (K16). K16 carries the N6-succinyllysine; alternate modification. Position 24 is a phosphotyrosine (Y24). S35 bears the Phosphoserine mark. N6-succinyllysine is present on K40. At S49 the chain carries Phosphoserine. Residue H58 coordinates O2. Position 87 (H87) interacts with heme b. Position 102 is a phosphoserine (S102). T108 carries the post-translational modification Phosphothreonine. Residues S124 and S131 each carry the phosphoserine modification. 2 positions are modified to phosphothreonine: T134 and T137. S138 bears the Phosphoserine mark.

It belongs to the globin family. Heterotetramer of two alpha chains and two beta chains. Red blood cells.

Involved in oxygen transport from the lung to the various peripheral tissues. Its function is as follows. Hemopressin acts as an antagonist peptide of the cannabinoid receptor CNR1. Hemopressin-binding efficiently blocks cannabinoid receptor CNR1 and subsequent signaling. The chain is Hemoglobin subunit alpha (HBA) from Theropithecus gelada (Gelada baboon).